The following is a 313-amino-acid chain: Pyrimidine-specific ribonucleoside hydrolase RihB (313 aa).

The active-site Proton acceptor is Asp11. Asp11, Asp16, and Val124 together coordinate Ca(2+). Residues Gln227 and His239 each coordinate substrate. Ca(2+) is bound at residue Asp240.

It belongs to the IUNH family. RihB subfamily. As to quaternary structure, homotetramer. Ca(2+) is required as a cofactor.

It carries out the reaction a pyrimidine ribonucleoside + H2O = a pyrimidine nucleobase + D-ribose. Its function is as follows. Hydrolyzes cytidine or uridine to ribose and cytosine or uracil, respectively. Has a clear preference for cytidine over uridine. Strictly specific for ribonucleosides. This is Pyrimidine-specific ribonucleoside hydrolase RihB from Escherichia coli (strain K12 / DH10B).